The following is a 516-amino-acid chain: Citrate synthase, glyoxysomal (516 aa).

The N-terminal 43 residues, 1–43, are a transit peptide targeting the glyoxysome; it reads MPTDMELSPSNVARHRLAVLAAHLSAASLEPPVMASSLEAHCV. Active-site residues include H329, H368, and D424.

The protein belongs to the citrate synthase family.

Its subcellular location is the glyoxysome. The catalysed reaction is oxaloacetate + acetyl-CoA + H2O = citrate + CoA + H(+). It functions in the pathway carbohydrate metabolism; glyoxylate cycle; isocitrate from oxaloacetate: step 1/2. In Cucurbita maxima (Pumpkin), this protein is Citrate synthase, glyoxysomal.